A 180-amino-acid polypeptide reads, in one-letter code: Homeobox protein ceh-12 (180 aa).

The disordered stretch occupies residues 15-37 (SSQNEDQKLESHPSPPSQIPNYS). A DNA-binding region (homeobox) is located at residues 110 to 169 (MRRPRTAFSSEQLVQLEKQFSDNRYLSRPRRYQLAQQLSLSETQIKIWFQNRRMKNKRCP).

Expressed in VB motor neurons in the ventral nerve cord.

Its subcellular location is the nucleus. Transcription factor. Plays a role, downstream from homeobox protein unc-4 and Wnt signaling, in specifying synaptic inputs to A-class motor neurons. Involved in patterning of the synaptic outputs of the postmitotic DA class cholinergic motor neurons. This Caenorhabditis elegans protein is Homeobox protein ceh-12 (ceh-12).